We begin with the raw amino-acid sequence, 201 residues long: Holliday junction resolvase RecU (201 aa).

4 residues coordinate Mg(2+): Thr87, Asp89, Glu102, and Gln121.

This sequence belongs to the RecU family. It depends on Mg(2+) as a cofactor.

Its subcellular location is the cytoplasm. The catalysed reaction is Endonucleolytic cleavage at a junction such as a reciprocal single-stranded crossover between two homologous DNA duplexes (Holliday junction).. Endonuclease that resolves Holliday junction intermediates in genetic recombination. Cleaves mobile four-strand junctions by introducing symmetrical nicks in paired strands. Promotes annealing of linear ssDNA with homologous dsDNA. Required for DNA repair, homologous recombination and chromosome segregation. This is Holliday junction resolvase RecU from Listeria monocytogenes serotype 4b (strain F2365).